Reading from the N-terminus, the 353-residue chain is MSDALLKVESLTKHYPIEAGWFKTNVPVVRAVEDVSFTVQAGETLCVVGESGCGKSTLARLLMRLIDPTSGRVLVEGTDIAGLRKNELRAWRRRMQMVFQDPYSSLNPRLTAGQIITEPVENFECLSRRQRQELATDLLRKVGMSPEMASRYPSEMSGGQRQRLGIARALALKPSLIIADEAVSALDVSVQAQILNLLMDLQQETGIALIFISHDLAVVEHIGHRVAVMYLGRIVELSPRDALFAKPVHPYTEALIAAAPVPDPARARLEVPLEGEVPSPVNPPSGCAFHPRCPLAVDRCRAEVPPLVPMPDGRAVACHVRAPAAAAHISPSALASLALPKTVQPGGTILARR.

The 251-residue stretch at 6–256 (LKVESLTKHY…PVHPYTEALI (251 aa)) folds into the ABC transporter domain. 49–56 (GESGCGKS) is an ATP binding site.

This sequence belongs to the ABC transporter superfamily.

The protein localises to the cell inner membrane. Probably part of a binding-protein-dependent transport system y4tOPQRS for a peptide. Probably responsible for energy coupling to the transport system. The protein is Probable peptide ABC transporter ATP-binding protein y4tS of Sinorhizobium fredii (strain NBRC 101917 / NGR234).